The chain runs to 256 residues: Floral homeotic protein APETALA 1 (256 aa).

In terms of domain architecture, MADS-box spans 1–61 (MGRGRVQLKR…GKLFEYSTDS (61 aa)). The region spanning 88-178 (NTNWSMEYNR…FKQIKEREKI (91 aa)) is the K-box domain.

In terms of assembly, homodimer capable of binding to CArG-box sequences.

The protein localises to the nucleus. Functionally, transcription factor that promotes early floral meristem identity in synergy with LEAFY. Displays a redundant function with CAULIFLOWER in the up-regulation of LEAFY. Required subsequently for the transition of an inflorescence meristem into a floral meristem, and for the normal development of sepals and petals in flowers. Regulates positively B class homeotic proteins. This chain is Floral homeotic protein APETALA 1 (AP1), found in Citrus sinensis (Sweet orange).